We begin with the raw amino-acid sequence, 223 residues long: Sigma non-opioid intracellular receptor 1 (223 aa).

Topologically, residues 1-9 (MQWALGRRW) are lumenal. The interval 2–8 (QWALGRR) is targeting to endoplasmic reticulum-associated lipid droplets. The chain crosses the membrane as a helical span at residues 10-30 (VWAALLLAAAAVLTQVVWLWL). At 31-223 (GTQSFVFQHE…FTTYLFGQDS (193 aa)) the chain is on the cytoplasmic side. The important for ligand-binding stretch occupies residues 99–106 (SLSEYVLL). Residues 177–223 (VIPSTLAFALADTIFSTQDFLTLFYTLRAYARGLRLEFTTYLFGQDS) form a C-terminal hydrophobic region region.

The protein belongs to the ERG2 family. As to quaternary structure, homotrimer. Forms a ternary complex with ANK2 and ITPR3. The complex is disrupted by agonists. Interacts with KCNA4. Interacts with KCNA2; cocaine consumption leads to increased interaction. Interacts with RNF112 in an oxidative stress-regulated manner.

It localises to the nucleus inner membrane. Its subcellular location is the nucleus outer membrane. The protein resides in the nucleus envelope. It is found in the cytoplasmic vesicle. The protein localises to the endoplasmic reticulum membrane. It localises to the membrane. Its subcellular location is the lipid droplet. The protein resides in the cell junction. It is found in the cell membrane. The protein localises to the cell projection. It localises to the growth cone. Its subcellular location is the postsynaptic density membrane. In terms of biological role, functions in lipid transport from the endoplasmic reticulum and is involved in a wide array of cellular functions probably through regulation of the biogenesis of lipid microdomains at the plasma membrane. Involved in the regulation of different receptors it plays a role in BDNF signaling and EGF signaling. Also regulates ion channels like the potassium channel and could modulate neurotransmitter release. Plays a role in calcium signaling through modulation together with ANK2 of the ITP3R-dependent calcium efflux at the endoplasmic reticulum. Plays a role in several other cell functions including proliferation, survival and death. Originally identified for its ability to bind various psychoactive drugs it is involved in learning processes, memory and mood alteration. Necessary for proper mitochondrial axonal transport in motor neurons, in particular the retrograde movement of mitochondria. Plays a role in protecting cells against oxidative stress-induced cell death via its interaction with RNF112. This is Sigma non-opioid intracellular receptor 1 (SIGMAR1) from Mustela erminea (Ermine).